A 330-amino-acid polypeptide reads, in one-letter code: Fructose-1,6-bisphosphatase class 1 (330 aa).

Residues Glu84, Asp103, Leu105, and Asp106 each coordinate Mg(2+). Residues 106-109 (DGSS), Asn196, and Lys262 contribute to the substrate site. Mg(2+) is bound at residue Glu268.

Belongs to the FBPase class 1 family. In terms of assembly, homotetramer. It depends on Mg(2+) as a cofactor.

The protein localises to the cytoplasm. The catalysed reaction is beta-D-fructose 1,6-bisphosphate + H2O = beta-D-fructose 6-phosphate + phosphate. Its pathway is carbohydrate biosynthesis; gluconeogenesis. The sequence is that of Fructose-1,6-bisphosphatase class 1 from Shewanella sp. (strain ANA-3).